Here is a 253-residue protein sequence, read N- to C-terminus: Succinate dehydrogenase iron-sulfur subunit (253 aa).

[2Fe-2S] cluster-binding residues include cysteine 64, cysteine 69, and cysteine 84. Residues 146 to 174 form the 4Fe-4S ferredoxin-type domain; the sequence is RQWAYELSKCMTCGVCLEACPNVNSKSKF. [4Fe-4S] cluster-binding residues include cysteine 155, cysteine 158, and cysteine 161. [3Fe-4S] cluster contacts are provided by cysteine 165, cysteine 212, and cysteine 218. Cysteine 222 is a [4Fe-4S] cluster binding site.

It belongs to the succinate dehydrogenase/fumarate reductase iron-sulfur protein family. In B.subtilis succinate dehydrogenase forms part of an enzyme complex containing three subunits: a flavoprotein, an iron-sulfur protein and cytochrome b-558. It depends on [2Fe-2S] cluster as a cofactor. [3Fe-4S] cluster is required as a cofactor. The cofactor is [4Fe-4S] cluster.

The catalysed reaction is a quinone + succinate = fumarate + a quinol. It participates in carbohydrate metabolism; tricarboxylic acid cycle; fumarate from succinate (bacterial route): step 1/1. The chain is Succinate dehydrogenase iron-sulfur subunit (sdhB) from Bacillus subtilis (strain 168).